The chain runs to 252 residues: MIRPGRCLWQPCLSGRKRSRPSGPVSRHGMMAAMTAPTAAAIRPVQALLVVDVQAAFVSGWEAVPDADRVLRCTRDLLSRARAAGALVVHLQNDGEPGAVDAPHTPGWELHLPVEPGPRERVVRKTEDDGFADTPLGDLLTDAGVTELAVCGVLSEMCVAATARTALVRGHRVVLPHDAHATYDIPAAPGISDTVPAAMSSRAAEWALGDEVEIVPHAAAVPFAAAPRPAVGPAAAPGLPVSPAAPPPSPVR.

The active-site Nucleophile is the C158. Over residues 230 to 242 (AVGPAAAPGLPVS) the composition is skewed to low complexity. Residues 230–252 (AVGPAAAPGLPVSPAAPPPSPVR) are disordered. Positions 243–252 (PAAPPPSPVR) are enriched in pro residues.

This sequence belongs to the isochorismatase family.

The catalysed reaction is streptothricin F + H2O = streptothricin F acid. In terms of biological role, catalyzes the hydrolysis of the amide bond of streptolidine lactam, thereby conferring streptothricin (ST) resistance. Can hydrolyze streptothricin-F and streptothricin-D. However, this strain is believed to be a ST nonproducer, which raises the possibility that its true role may not be its involvement in self-resistance to STs. May catalyze the hydrolysis of naturally occurring cyclic amide compounds that are structurally related to STs. This is Streptothricin hydrolase (sttH) from Streptomyces noursei (Streptomyces albulus).